Consider the following 582-residue polypeptide: Aspartate--tRNA ligase (582 aa).

The tract at residues 198–201 is aspartate; the sequence is QIFK. An L-aspartate-binding site is contributed by Arg220. ATP-binding positions include 220-222 and Gln229; that span reads RDE. Residue His445 coordinates L-aspartate. Glu479 provides a ligand contact to ATP. Arg486 lines the L-aspartate pocket. 531–534 serves as a coordination point for ATP; that stretch reads GFDR.

Belongs to the class-II aminoacyl-tRNA synthetase family. Type 1 subfamily. As to quaternary structure, homodimer.

The protein resides in the cytoplasm. The enzyme catalyses tRNA(Asp) + L-aspartate + ATP = L-aspartyl-tRNA(Asp) + AMP + diphosphate. Functionally, catalyzes the attachment of L-aspartate to tRNA(Asp) in a two-step reaction: L-aspartate is first activated by ATP to form Asp-AMP and then transferred to the acceptor end of tRNA(Asp). This chain is Aspartate--tRNA ligase, found in Amoebophilus asiaticus (strain 5a2).